We begin with the raw amino-acid sequence, 339 residues long: MDQNNSLPPYAQGLASPQGAMTPGIPIFSPMMPYGTGLTPQPIQNTNSLSILEEQQRQQQQQQQQQQQQQQQQQQQQQQQQQQQQQQQQQQQQQQAVAAAAVQQSTSQQATQGTSGQAPQLFHSQTLTTAPLPGTTPLYPSPMTPMTPITPATPASESSGIVPQLQNIVSTVNLGCKLDLKTIALRARNAEYNPKRFAAVIMRIREPRTTALIFSSGKMVCTGAKSEEQSRLAARKYARVVQKLGFPAKFLDFKIQNMVGSCDVKFPIRLEGLVLTHQQFSSYEPELFPGLIYRMIKPRIVLLIFVSGKVVLTGAKVRAEIYEAFENIYPILKGFRKTT.

Disordered stretches follow at residues 1–21, 36–71, and 127–159; these read MDQN…QGAM, TGLT…QQQQ, and LTTA…SESS. The span at 38-50 shows a compositional bias: polar residues; sequence LTPQPIQNTNSLS. 3 stretches are compositionally biased toward low complexity: residues 57–71, 127–138, and 146–156; these read RQQQ…QQQQ, LTTAPLPGTTPL, and MTPITPATPAS. 2 consecutive repeat copies span residues 165 to 241 and 255 to 332. DNA contacts are provided by Asn167, Arg203, Lys218, Asn257, and Arg294.

It belongs to the TBP family. In terms of assembly, binds DNA as monomer. Component of the TFIID basal transcription factor complex, composed of TATA-box-binding protein TBP, and a number of TBP-associated factors (TAFs), including TAF1, TAF2, TAF3, TAF4, TAF5, TAF6, TAF7, TAF8, TAF9, TAF10, TAF11, TAF12 and TAF13. Part of a TFIID-containing RNA polymerase II pre-initiation complex that is composed of TBP and at least GTF2A1, GTF2A2, GTF2E1, GTF2E2, GTF2F1, GTF2H2, GTF2H3, GTF2H4, GTF2H5, GTF2B, TCEA1, ERCC2, ERCC3, TAF1, TAF2, TAF3, TAF4, TAF5, TAF6, TAF7, TAF8, TAF9, TAF10, TAF11, TAF12 and TAF13. Component of the transcription factor SL1/TIF-IB complex, composed of TBP and at least TAF1A, TAF1B, TAF1C and TAF1D. Association of TBP to form either TFIID or SL1/TIF-IB appears to be mutually exclusive. Interacts with TAF1A, TAF1B and TAF1C. Interacts with TFIIB, NCOA6, DRAP1, DR1 and ELF3. Interacts with SPIB, SNAPC1, SNAPC2 and SNAPC4. Interacts with UTF1. Interacts with BRF2; this interaction promotes recruitment of BRF2 to TATA box-containing promoters. Interacts with UBTFD. Interacts with GPBP1D. Interacts with CITED2. Interacts with ATF7IP. Interacts with LLPH. Interacts with HSF1 (via transactivation domain). Interacts with GTF2B (via C-terminus); this interaction with promoter-bound TBP guides RNA polymerase II into the pre-initiation complex (PIC). Interacts with PAX5. Interacts with MSX1; the interaction may inhibit MSX1 autoinactivation. As to quaternary structure, (Microbial infection) Interacts with HIV-1 Tat. (Microbial infection) Interacts with herpes simplex virus 1 ICP4. In terms of assembly, (Microbial infection) Interacts with herpes simplex virus 2 ICP4. As to quaternary structure, (Microbial infection) Interacts with human adenovirus E1A protein; this interaction probably disrupts the TBP-TATA complex. In terms of tissue distribution, widely expressed, with levels highest in the testis and ovary.

The protein localises to the nucleus. The TFIID basal transcription factor complex plays a major role in the initiation of RNA polymerase II (Pol II)-dependent transcription. TFIID recognizes and binds promoters with or without a TATA box via its subunit TBP, a TATA-box-binding protein, and promotes assembly of the pre-initiation complex (PIC). The TFIID complex consists of TBP and TBP-associated factors (TAFs), including TAF1, TAF2, TAF3, TAF4, TAF5, TAF6, TAF7, TAF8, TAF9, TAF10, TAF11, TAF12 and TAF13. The TFIID complex structure can be divided into 3 modules TFIID-A, TFIID-B, and TFIID-C. TBP forms the TFIID-A module together with TAF3 and TAF5. TBP is a general transcription factor that functions at the core of the TFIID complex. During assembly of the core PIC on the promoter, as part of TFIID, TBP binds to and also bends promoter DNA, irrespective of whether the promoter contains a TATA box. Component of a BRF2-containing transcription factor complex that regulates transcription mediated by RNA polymerase III. Component of the transcription factor SL1/TIF-IB complex, which is involved in the assembly of the PIC during RNA polymerase I-dependent transcription. The rate of PIC formation probably is primarily dependent on the rate of association of SL1 with the rDNA promoter. SL1 is involved in stabilization of nucleolar transcription factor 1/UBTF on rDNA. The protein is TATA-box-binding protein (TBP) of Homo sapiens (Human).